The chain runs to 165 residues: Large ribosomal subunit protein uL10 (165 aa).

This sequence belongs to the universal ribosomal protein uL10 family. Part of the ribosomal stalk of the 50S ribosomal subunit. The N-terminus interacts with L11 and the large rRNA to form the base of the stalk. The C-terminus forms an elongated spine to which L12 dimers bind in a sequential fashion forming a multimeric L10(L12)X complex.

Functionally, forms part of the ribosomal stalk, playing a central role in the interaction of the ribosome with GTP-bound translation factors. The protein is Large ribosomal subunit protein uL10 of Dechloromonas aromatica (strain RCB).